The following is a 183-amino-acid chain: Crossover junction endodeoxyribonuclease RuvC (183 aa).

Residues Asp-16, Glu-75, and Asp-147 contribute to the active site. Residues Asp-16, Glu-75, and Asp-147 each contribute to the Mg(2+) site.

It belongs to the RuvC family. As to quaternary structure, homodimer which binds Holliday junction (HJ) DNA. The HJ becomes 2-fold symmetrical on binding to RuvC with unstacked arms; it has a different conformation from HJ DNA in complex with RuvA. In the full resolvosome a probable DNA-RuvA(4)-RuvB(12)-RuvC(2) complex forms which resolves the HJ. It depends on Mg(2+) as a cofactor.

It is found in the cytoplasm. It carries out the reaction Endonucleolytic cleavage at a junction such as a reciprocal single-stranded crossover between two homologous DNA duplexes (Holliday junction).. Its function is as follows. The RuvA-RuvB-RuvC complex processes Holliday junction (HJ) DNA during genetic recombination and DNA repair. Endonuclease that resolves HJ intermediates. Cleaves cruciform DNA by making single-stranded nicks across the HJ at symmetrical positions within the homologous arms, yielding a 5'-phosphate and a 3'-hydroxyl group; requires a central core of homology in the junction. The consensus cleavage sequence is 5'-(A/T)TT(C/G)-3'. Cleavage occurs on the 3'-side of the TT dinucleotide at the point of strand exchange. HJ branch migration catalyzed by RuvA-RuvB allows RuvC to scan DNA until it finds its consensus sequence, where it cleaves and resolves the cruciform DNA. The chain is Crossover junction endodeoxyribonuclease RuvC from Azoarcus sp. (strain BH72).